The following is a 654-amino-acid chain: Protein fem-1 homolog A-A (654 aa).

ANK repeat units follow at residues 2 to 31 (DLHT…REEL), 40 to 70 (GGGT…SVEA), 82 to 111 (EGAP…SVNR), 115 to 145 (TNST…DLEV), 149 to 178 (HGHT…QVNR), 182 to 211 (KGNT…RMER), and 214 to 243 (YGMT…GHEQ). Serine 108 is modified (phosphoserine). Residues 242-265 (EQLSGTELPGEGSSQVAGNHCSTP) are disordered. Residues 253–263 (GSSQVAGNHCS) are compositionally biased toward polar residues. 2 TPR repeats span residues 283-317 (VEAL…RHQG) and 375-408 (SYYI…QQNN). 2 ANK repeats span residues 519–561 (NGFT…DPDS) and 565–594 (DNNT…HMDA). Serine 608 is subject to Phosphoserine.

It belongs to the fem-1 family. As to quaternary structure, component of a CRL2 E3 ubiquitin-protein ligase complex, also named ECS (Elongin BC-CUL2/5-SOCS-box protein) complex, composed of CUL2, Elongin BC (ELOB and ELOC), RBX1 and substrate-specific adapter FEM1A. Interacts with PTGER4. Interacts with NFKB1; the interaction is direct. Phosphorylated; highly phosphorylated in myoblasts and myotubes. Phosphorylation at Ser-108 and Ser-608 promote PGE2-EP4-mediated inhibition of inflammation. Dephosphorylated by protein phosphatase 2A (PP2A). Preferentially expressed in cardiac muscle, brain and liver (at protein level). Also expressed in skeletal muscle.

Its subcellular location is the mitochondrion. The protein localises to the cytoplasm. It participates in protein modification; protein ubiquitination. In terms of biological role, substrate-recognition component of a Cul2-RING (CRL2) E3 ubiquitin-protein ligase complex of the DesCEND (destruction via C-end degrons) pathway, which recognizes a C-degron located at the extreme C terminus of target proteins, leading to their ubiquitination and degradation. The C-degron recognized by the DesCEND pathway is usually a motif of less than ten residues and can be present in full-length proteins, truncated proteins or proteolytically cleaved forms. The CRL2(FEM1A) complex specifically recognizes proteins with an arginine at the C-terminus: recognizes and binds proteins ending with -Lys/Arg-Xaa-Arg and -Lys/Arg-Xaa-Xaa-Arg C-degrons, such as SIL1 or OR51B2, leading to their ubiquitination and degradation. Involved in PGE2-EP4-mediated inhibition of inflammation of macrophages via interaction with NFKB1 and PTGER4. Promotes inflammation in brain microglia through MAP2K4/MKK4-mediated signaling. The protein is Protein fem-1 homolog A-A of Mus musculus (Mouse).